The chain runs to 115 residues: MHALDALDALSIKADIPDFSPGDTVRVYVNITEGDRSRVQVFQGVVIARRGFGVRQTFTVRKISFQVGVERIFPLHSPSINRIEVVTKGSVRRAKLYYIRKLRGKKAKVKQKREL.

It belongs to the bacterial ribosomal protein bL19 family.

Its function is as follows. This protein is located at the 30S-50S ribosomal subunit interface and may play a role in the structure and function of the aminoacyl-tRNA binding site. In Tropheryma whipplei (strain TW08/27) (Whipple's bacillus), this protein is Large ribosomal subunit protein bL19.